The primary structure comprises 318 residues: Methionyl-tRNA formyltransferase (318 aa).

(6S)-5,6,7,8-tetrahydrofolate is bound at residue 114–117; sequence SVLP.

The protein belongs to the Fmt family.

The enzyme catalyses L-methionyl-tRNA(fMet) + (6R)-10-formyltetrahydrofolate = N-formyl-L-methionyl-tRNA(fMet) + (6S)-5,6,7,8-tetrahydrofolate + H(+). Attaches a formyl group to the free amino group of methionyl-tRNA(fMet). The formyl group appears to play a dual role in the initiator identity of N-formylmethionyl-tRNA by promoting its recognition by IF2 and preventing the misappropriation of this tRNA by the elongation apparatus. This is Methionyl-tRNA formyltransferase from Bdellovibrio bacteriovorus (strain ATCC 15356 / DSM 50701 / NCIMB 9529 / HD100).